We begin with the raw amino-acid sequence, 247 residues long: MLLLRSALTRALASRTLAPQVCSSFATGPRQYDGIFYEFRSYYLKPSKMNEFLENFKKNAHLRTAHSELVGYWSVEFGGRMNTVFHIWKYDNFAHRTEVRKALAKDKEWQEQFLIPNLALIDKQESEITYLVPWCKLEKPPKEGVYELATFQMKPGGPALWGDAFKRAVHAHVNLGYTKLVGVFHTEYGALNRVHVLWWNESADSRAAGRHKSHEDPRVVAAVRESVNYLVSQQNMLLIPTSFSPLK.

Residues lysine 48 and lysine 166 each carry the N6-acetyllysine modification.

This sequence belongs to the NipSnap family.

Its subcellular location is the cytoplasm. It localises to the cytosol. In Pongo abelii (Sumatran orangutan), this protein is Protein NipSnap homolog 3A (NIPSNAP3A).